A 321-amino-acid polypeptide reads, in one-letter code: ATP-dependent 6-phosphofructokinase (321 aa).

G12 contacts ATP. ADP-binding positions include 22-26 (RGVVR) and 55-60 (RYSVSD). ATP-binding positions include 73 to 74 (RF) and 103 to 106 (GDGS). A Mg(2+)-binding site is contributed by D104. 127–129 (TID) provides a ligand contact to substrate. D129 (proton acceptor) is an active-site residue. Residue R156 coordinates ADP. Substrate contacts are provided by residues R164 and 171 to 173 (MGR). Residues 187 to 189 (GCE) and 215 to 217 (KRH) contribute to the ADP site. Substrate-binding positions include E224, R245, and 251 to 254 (HVQR).

Belongs to the phosphofructokinase type A (PFKA) family. ATP-dependent PFK group I subfamily. Prokaryotic clade 'B1' sub-subfamily. In terms of assembly, homotetramer. It depends on Mg(2+) as a cofactor.

Its subcellular location is the cytoplasm. The catalysed reaction is beta-D-fructose 6-phosphate + ATP = beta-D-fructose 1,6-bisphosphate + ADP + H(+). Its pathway is carbohydrate degradation; glycolysis; D-glyceraldehyde 3-phosphate and glycerone phosphate from D-glucose: step 3/4. With respect to regulation, allosterically activated by ADP and other diphosphonucleosides, and allosterically inhibited by phosphoenolpyruvate. Catalyzes the phosphorylation of D-fructose 6-phosphate to fructose 1,6-bisphosphate by ATP, the first committing step of glycolysis. The chain is ATP-dependent 6-phosphofructokinase from Mannheimia succiniciproducens (strain KCTC 0769BP / MBEL55E).